The primary structure comprises 150 residues: UPF0178 protein Shewana3_1627 (150 aa).

Belongs to the UPF0178 family.

This is UPF0178 protein Shewana3_1627 from Shewanella sp. (strain ANA-3).